A 338-amino-acid chain; its full sequence is Nicotinate-nucleotide--dimethylbenzimidazole phosphoribosyltransferase (338 aa).

Glu305 serves as the catalytic Proton acceptor.

This sequence belongs to the CobT family.

The catalysed reaction is 5,6-dimethylbenzimidazole + nicotinate beta-D-ribonucleotide = alpha-ribazole 5'-phosphate + nicotinate + H(+). The protein operates within nucleoside biosynthesis; alpha-ribazole biosynthesis; alpha-ribazole from 5,6-dimethylbenzimidazole: step 1/2. In terms of biological role, catalyzes the synthesis of alpha-ribazole-5'-phosphate from nicotinate mononucleotide (NAMN) and 5,6-dimethylbenzimidazole (DMB). This Rhizobium etli (strain ATCC 51251 / DSM 11541 / JCM 21823 / NBRC 15573 / CFN 42) protein is Nicotinate-nucleotide--dimethylbenzimidazole phosphoribosyltransferase.